The chain runs to 1014 residues: C2 domain-containing protein 5 (1014 aa).

The region spanning 1–109 (MPGKLKVKIV…EAATVISGWF (109 aa)) is the C2 domain. Residues D19, D26, D76, D78, S81, and D84 each contribute to the Ca(2+) site. Disordered regions lie at residues 274 to 328 (LNPN…GRDG), 639 to 669 (ETVGSPIPEPRQRTRLLRSQSESSDEAAELD), 801 to 878 (ALQV…HRGG), and 992 to 1014 (EAGPGQPTAPGPQSAGVGGDSAT). Positions 275 to 292 (NPNTHSSGPSTPLKNQTY) are enriched in polar residues. The span at 293-318 (SFSPSKSFSRQSSSSDTDLSLTPKTG) shows a compositional bias: low complexity. Residues 319 to 328 (MGSGSAGRDG) show a composition bias toward gly residues. The segment covering 830-840 (SSDSPGPSTFS) has biased composition (polar residues). Residues 993-1006 (AGPGQPTAPGPQSA) show a composition bias toward low complexity.

Ca(2+) is required as a cofactor.

It localises to the cytoplasmic vesicle membrane. It is found in the cytoplasm. The protein localises to the cell cortex. Its subcellular location is the cell membrane. The protein resides in the cell projection. It localises to the ruffle. Its function is as follows. May be required for insulin-stimulated glucose transport and glucose transporter SLC2A4/GLUT4 translocation from intracellular glucose storage vesicle (GSV) to the plasma membrane (PM) in adipocytes. May bind phospholipid membranes in a calcium-dependent manner. This is C2 domain-containing protein 5 (c2cd5) from Xenopus tropicalis (Western clawed frog).